The following is a 156-amino-acid chain: Ribosomal RNA large subunit methyltransferase H (156 aa).

Residues leucine 73, glycine 104, and 123-128 contribute to the S-adenosyl-L-methionine site; that span reads IGPLTL.

This sequence belongs to the RNA methyltransferase RlmH family. In terms of assembly, homodimer.

It localises to the cytoplasm. It catalyses the reaction pseudouridine(1915) in 23S rRNA + S-adenosyl-L-methionine = N(3)-methylpseudouridine(1915) in 23S rRNA + S-adenosyl-L-homocysteine + H(+). In terms of biological role, specifically methylates the pseudouridine at position 1915 (m3Psi1915) in 23S rRNA. This chain is Ribosomal RNA large subunit methyltransferase H, found in Xanthomonas campestris pv. campestris (strain 8004).